The chain runs to 532 residues: Eukaryotic translation initiation factor 4B1 (532 aa).

Disordered regions lie at residues 16–365 (EAER…LEEQ), 401–434 (KKLEKESVAPEIKESDQEPGSNNNHNDLPEIIRG), and 451–532 (RFRQ…REGW). Over residues 26–35 (AEATAATADT) the composition is skewed to low complexity. 2 stretches are compositionally biased toward gly residues: residues 105–120 (RLGGGFSSYGGRSGGR) and 132–147 (WSGGGGGGGRRPYGGG). Residues 167–180 (RADEVDDWGKEKKP) are compositionally biased toward basic and acidic residues. The short motif at 177-184 (EKKPLPSF) is the Nuclear localization signal 1 element. Over residues 193–217 (SGDGGGFGGGGSGFGGGGGGGGGGL) the composition is skewed to gly residues. Positions 237-244 (SSTFGSSF) match the Nuclear localization signal 2 motif. Low complexity predominate over residues 237–247 (SSTFGSSFGDS). Composition is skewed to basic and acidic residues over residues 249–263 (QEERRRLVLEPRKVE) and 286–310 (RPREDVLAEKGLDWKKIDSEIEAKK). Residues 315–337 (TSRPTSAHSSRPSSAQSNRSESS) show a composition bias toward low complexity. 4 stretches are compositionally biased toward basic and acidic residues: residues 355–365 (AKPREVLLEEQ), 401–416 (KKLEKESVAPEIKESD), 472–494 (ERTHSRAGSIDETRSFESTERPR), and 507–520 (NEQRRNFQGTKERG).

This sequence belongs to the eIF-4 subunit B family. Homodimer. Nonspherical monomer. mRNA-discriminating component of initiation complexes. Phosphorylated.

The protein localises to the nucleus. Functionally, promotes the eIF4F and eIF4A RNA-dependent ATP-hydrolysis activity with different efficiency depending on mRNAs, thus providing mRNA discrimination during initiation of translation. The chain is Eukaryotic translation initiation factor 4B1 from Arabidopsis thaliana (Mouse-ear cress).